The following is a 246-amino-acid chain: Glandular kallikrein (246 aa).

Residues 1-7 (APPIQSR) constitute a propeptide that is removed on maturation. In terms of domain architecture, Peptidase S1 spans 8–243 (IIGGRECEKN…YLDWINDTIT (236 aa)). Cystine bridges form between Cys-14–Cys-158, Cys-33–Cys-49, Cys-135–Cys-204, Cys-169–Cys-183, and Cys-194–Cys-219. The active-site Charge relay system is His-48. Residue Asn-85 is glycosylated (N-linked (GlcNAc...) asparagine). Positions 85–104 (NLSLLKXHTKADGKDYSHDL) are kallikrein (autolysis) loop. Asp-103 (charge relay system) is an active-site residue. The Charge relay system role is filled by Ser-198. Asn-239 is a glycosylation site (N-linked (GlcNAc...) asparagine).

The protein belongs to the peptidase S1 family. Kallikrein subfamily. In terms of assembly, monomer.

The catalysed reaction is Preferential cleavage of Arg-|-Xaa bonds in small molecule substrates. Highly selective action to release kallidin (lysyl-bradykinin) from kininogen involves hydrolysis of Met-|-Xaa or Leu-|-Xaa.. Glandular kallikreins cleave Met-Lys and Arg-Ser bonds in kininogen to release Lys-bradykinin. The protein is Glandular kallikrein of Sus scrofa (Pig).